Consider the following 909-residue polypeptide: Lon protease homolog 2, peroxisomal (909 aa).

Positions 1–230 constitute a Lon N-terminal domain; sequence MAPVRAPTAR…KVIELLDRQV (230 aa). The interval 249 to 269 is disordered; sequence FPMDPDSTKPGKVKPPVKAPG. 463-470 contacts ATP; the sequence is GPPGVGKT. Residues 706-893 form the Lon proteolytic domain; sequence TSRPGIVTGL…WEAIRYVWPD (188 aa). Residues Ser799 and Lys842 contribute to the active site. A Microbody targeting signal motif is present at residues 907-909; sequence SRL.

It belongs to the peptidase S16 family.

It is found in the peroxisome matrix. It localises to the cytoplasm. It catalyses the reaction Hydrolysis of proteins in presence of ATP.. Its function is as follows. ATP-dependent serine protease that mediates the selective degradation of misfolded and unassembled polypeptides in the peroxisomal matrix. Necessary for type 2 peroxisome targeting signal (PTS2)-containing protein processing and facilitates peroxisome matrix protein import. This chain is Lon protease homolog 2, peroxisomal, found in Sordaria macrospora (strain ATCC MYA-333 / DSM 997 / K(L3346) / K-hell).